The following is a 474-amino-acid chain: MSTSELVFIPSPGAGHLPPTVELAKLLLHRDQRLSVTIIVMNLWLGPKHNTEARPCVPSLRFVDIPCDESTMALISPNTFISAFVEHHKPRVRDIVRGIIESDSVRLAGFVLDMFCMPMSDVANEFGVPSYNYFTSGAATLGLMFHLQWKRDHEGYDATELKNSDTELSVPSYVNPVPAKVLPEVVLDKEGGSKMFLDLAERIRESKGIIVNSCQAIERHALEYLSSNNNGIPPVFPVGPILNLENKKDDAKTDEIMRWLNEQPESSVVFLCFGSMGSFNEKQVKEIAVAIERSGHRFLWSLRRPTPKEKIEFPKEYENLEEVLPEGFLKRTSSIGKVIGWAPQMAVLSHPSVGGFVSHCGWNSTLESMWCGVPMAAWPLYAEQTLNAFLLVVELGLAAEIRMDYRTDTKAGYDGGMEVTVEEIEDGIRKLMSDGEIRNKVKDVKEKSRAAVVEGGSSYASIGKFIEHVSNVTI.

Residues Ser-275, 341–342 (WA), 359–367 (HCGWNSTLE), and 381–384 (YAEQ) contribute to the UDP-alpha-D-glucose site.

This sequence belongs to the UDP-glycosyltransferase family.

May glycosylate diterpenes or flavonols in leaves. The protein is UDP-glycosyltransferase 71E1 of Stevia rebaudiana (Stevia).